Here is a 722-residue protein sequence, read N- to C-terminus: Ribosomal RNA large subunit methyltransferase K/L (722 aa).

The 113-residue stretch at 55–167 (TGYRACLWSR…GNEGTLYLDL (113 aa)) folds into the THUMP domain.

Belongs to the methyltransferase superfamily. RlmKL family.

Its subcellular location is the cytoplasm. The catalysed reaction is guanosine(2445) in 23S rRNA + S-adenosyl-L-methionine = N(2)-methylguanosine(2445) in 23S rRNA + S-adenosyl-L-homocysteine + H(+). The enzyme catalyses guanosine(2069) in 23S rRNA + S-adenosyl-L-methionine = N(2)-methylguanosine(2069) in 23S rRNA + S-adenosyl-L-homocysteine + H(+). Specifically methylates the guanine in position 2445 (m2G2445) and the guanine in position 2069 (m7G2069) of 23S rRNA. This is Ribosomal RNA large subunit methyltransferase K/L from Desulfotalea psychrophila (strain LSv54 / DSM 12343).